Reading from the N-terminus, the 540-residue chain is Extracellular matrix protein 1 (540 aa).

Positions 1–19 (MGTTARAALVLTYLAVASA) are cleaved as a signal peptide. Disordered regions lie at residues 41 to 85 (VGYA…EATP) and 120 to 175 (LQHP…PSPD). 2 stretches are compositionally biased toward polar residues: residues 71–85 (GQSQ…EATP) and 146–156 (NAAQHCQQDRS). 2 consecutive repeat copies span residues 150–279 (HCQQ…QPHY) and 283–405 (ACPS…YPNY). The tract at residues 150–405 (HCQQDRSQGG…FARRAPYPNY (256 aa)) is 2 X approximate repeats. A glycan (N-linked (GlcNAc...) asparagine) is linked at Asn-354. Asn-444 carries an N-linked (GlcNAc...) (complex) asparagine glycan. The tract at residues 515–540 (ENAKGQGEQGSTGGTNISSTSEPKEE) is disordered. The segment covering 528 to 540 (GTNISSTSEPKEE) has biased composition (low complexity). Asn-530 carries N-linked (GlcNAc...) asparagine glycosylation.

In terms of assembly, interacts (via C-terminus) with HSPG2 (via C-terminus). Interacts with EFEMP1/FBLN3 and LAMB3. Interacts with MMP9. As to expression, expressed in breast cancer tissues. Little or no expression observed in normal breast tissues. Expressed in skin; wide expression is observed throughout the dermis with minimal expression in the epidermis.

The protein localises to the secreted. Its subcellular location is the extracellular space. The protein resides in the extracellular matrix. Functionally, involved in endochondral bone formation as negative regulator of bone mineralization. Stimulates the proliferation of endothelial cells and promotes angiogenesis. Inhibits MMP9 proteolytic activity. The protein is Extracellular matrix protein 1 (ECM1) of Homo sapiens (Human).